The following is a 161-amino-acid chain: Urease accessory protein UreE (161 aa).

The protein belongs to the UreE family.

Its subcellular location is the cytoplasm. Involved in urease metallocenter assembly. Binds nickel. Probably functions as a nickel donor during metallocenter assembly. This Arthrobacter sp. (strain FB24) protein is Urease accessory protein UreE.